The primary structure comprises 219 residues: Cytidylate kinase (219 aa).

15–23 (GPAASGKGT) contributes to the ATP binding site.

Belongs to the cytidylate kinase family. Type 1 subfamily.

Its subcellular location is the cytoplasm. It carries out the reaction CMP + ATP = CDP + ADP. The catalysed reaction is dCMP + ATP = dCDP + ADP. The chain is Cytidylate kinase from Brucella melitensis biotype 1 (strain ATCC 23456 / CCUG 17765 / NCTC 10094 / 16M).